The following is a 160-amino-acid chain: Eosinophil cationic protein (160 aa).

Residues 1–27 (MVPKLFTPQICLLLLLGLMGVEGSLHA) form the signal peptide. The interval 28 to 72 (RPPQFTKAQWFAIQHINVNPPRCTIAMRVINNYQRRCKNQNTFLR) is required for nearly all of the bactericidal activities; partially involved in LPS-binding. The active-site Proton acceptor is the histidine 42. Disulfide bonds link cysteine 50–cysteine 110, cysteine 64–cysteine 123, cysteine 82–cysteine 138, and cysteine 89–cysteine 98. At tyrosine 60 the chain carries 3'-nitrotyrosine. 65 to 69 (KNQNT) is a substrate binding site. N-linked (GlcNAc...) asparagine glycosylation is found at asparagine 84, asparagine 92, and asparagine 119. The active-site Proton donor is the histidine 155.

It belongs to the pancreatic ribonuclease family. In terms of assembly, interacts with bacterial lipopolysaccharide (LPS) and lipoteichoic acid (LTA). In vitro interacts with phospholipid bilayers.

Its subcellular location is the secreted. Functionally, cytotoxin and helminthotoxin with low-efficiency ribonuclease activity. Possesses a wide variety of biological activities. Exhibits antibacterial activity. The chain is Eosinophil cationic protein (RNASE3) from Macaca nemestrina (Pig-tailed macaque).